The primary structure comprises 396 residues: Elongation factor Tu (396 aa).

The tr-type G domain maps to 10–206 (KPHVNVGTIG…TMDSYIPEPV (197 aa)). The interval 19-26 (GHVDHGKT) is G1. 19 to 26 (GHVDHGKT) contributes to the GTP binding site. Thr-26 contacts Mg(2+). A G2 region spans residues 60–64 (GITIS). The interval 81–84 (DCPG) is G3. GTP is bound by residues 81–85 (DCPGH) and 136–139 (NKAD). A G4 region spans residues 136 to 139 (NKAD). A G5 region spans residues 174–176 (SAL).

The protein belongs to the TRAFAC class translation factor GTPase superfamily. Classic translation factor GTPase family. EF-Tu/EF-1A subfamily. In terms of assembly, monomer.

The protein resides in the cytoplasm. The enzyme catalyses GTP + H2O = GDP + phosphate + H(+). Functionally, GTP hydrolase that promotes the GTP-dependent binding of aminoacyl-tRNA to the A-site of ribosomes during protein biosynthesis. The protein is Elongation factor Tu of Legionella pneumophila (strain Paris).